Here is a 124-residue protein sequence, read N- to C-terminus: Large ribosomal subunit protein uL14 (124 aa).

It belongs to the universal ribosomal protein uL14 family. In terms of assembly, part of the 50S ribosomal subunit. Forms a cluster with proteins L3 and L19. In the 70S ribosome, L14 and L19 interact and together make contacts with the 16S rRNA in bridges B5 and B8.

Its function is as follows. Binds to 23S rRNA. Forms part of two intersubunit bridges in the 70S ribosome. The chain is Large ribosomal subunit protein uL14 from Clostridium novyi (strain NT).